Reading from the N-terminus, the 1699-residue chain is DNA polymerase (1699 aa).

DOD-type homing endonuclease domains lie at 770–903 (LLGY…SLGI) and 1222–1361 (LIGL…LVGV).

Belongs to the DNA polymerase type-B family. Post-translationally, this protein undergoes a protein self splicing that involves a post-translational excision of the intervening region (intein) followed by peptide ligation.

It carries out the reaction DNA(n) + a 2'-deoxyribonucleoside 5'-triphosphate = DNA(n+1) + diphosphate. Its function is as follows. In addition to polymerase activity, this DNA polymerase exhibits 3' to 5' exonuclease activity. Functionally, PI-TspGE8I and PI-TspGE8II are endonucleases. This Thermococcus sp. (strain GE8) protein is DNA polymerase (pol).